A 332-amino-acid chain; its full sequence is Isopentenyl-diphosphate delta-isomerase (332 aa).

6–7 contributes to the substrate binding site; sequence RK. FMN is bound by residues 65–67, serine 95, and asparagine 123; that span reads AMT. Substrate is bound at residue 95–97; the sequence is SGR. Glutamine 157 lines the substrate pocket. Glutamate 158 lines the Mg(2+) pocket. Residues lysine 187, threonine 217, 264–266, alanine 285, and 285–286 each bind FMN; these read GVY and AR.

This sequence belongs to the IPP isomerase type 2 family. As to quaternary structure, homooctamer. Dimer of tetramers. The cofactor is FMN. NADPH serves as cofactor. It depends on Mg(2+) as a cofactor.

The protein resides in the cytoplasm. It catalyses the reaction isopentenyl diphosphate = dimethylallyl diphosphate. Competitively inhibited by N,N-dimethyl-2-amino-1-ethyl diphosphate (NIPP) and isopentyl diphosphate. Functionally, involved in the biosynthesis of isoprenoids. Catalyzes the 1,3-allylic rearrangement of the homoallylic substrate isopentenyl (IPP) to its allylic isomer, dimethylallyl diphosphate (DMAPP). This chain is Isopentenyl-diphosphate delta-isomerase, found in Thermus thermophilus (strain ATCC BAA-163 / DSM 7039 / HB27).